Here is a 394-residue protein sequence, read N- to C-terminus: Mannosyl-3-phosphoglycerate synthase (394 aa).

Belongs to the glycosyltransferase 2 family. Mg(2+) is required as a cofactor.

It localises to the cytoplasm. The enzyme catalyses (2R)-3-phosphoglycerate + GDP-alpha-D-mannose = 2-O-(alpha-D-mannosyl)-3-phosphoglycerate + GDP + H(+). It functions in the pathway carbohydrate biosynthesis; 2-(alpha-D-mannosyl)-D-glycerate biosynthesis; 2-(alpha-D-mannosyl)-D-glycerate from GDP-alpha-D-mannose (MPG route): step 1/2. Its function is as follows. Transfers a mannosyl group from GDP-mannose to phosphoglycerate to form mannosyl-3-phosphoglycerate (MPG). The enzyme is absolutely specific for GDP-mannose and 3-phosphoglycerate, and transfers the mannosyl group with retention of configuration. The sequence is that of Mannosyl-3-phosphoglycerate synthase (mngA) from Pyrococcus horikoshii (strain ATCC 700860 / DSM 12428 / JCM 9974 / NBRC 100139 / OT-3).